The sequence spans 34 residues: Phallacidin proprotein 1 (34 aa).

The propeptide occupies 1-10 (MSDINATRLP). A cross-link (cyclopeptide (Ala-Pro)) is located at residues 11 to 17 (AWLVDCP). A cross-link (2'-cysteinyl-6'-hydroxytryptophan sulfoxide (Trp-Cys)) is located at residues 12 to 16 (WLVDC). The propeptide occupies 18–34 (CVGDDVNRLLTRGESLC).

The protein belongs to the MSDIN fungal toxin family. In terms of processing, processed by the macrocyclase-peptidase enzyme POPB to yield a toxic cyclic heptapeptide. POPB first removes 10 residues from the N-terminus. Conformational trapping of the remaining peptide forces the enzyme to release this intermediate rather than proceed to macrocyclization. The enzyme rebinds the remaining peptide in a different conformation and catalyzes macrocyclization of the N-terminal 7 residues.

Functionally, major toxin that belongs to the bicyclic heptapeptides called phallotoxins. Although structurally related to amatoxins, phallotoxins have a different mode of action, which is the stabilization of F-actin. Phallotoxins are poisonous when administered parenterally, but not orally because of poor absorption. The polypeptide is Phallacidin proprotein 1 (Amanita bisporigera (Destroying angel)).